A 355-amino-acid chain; its full sequence is Heavy metal-associated isoprenylated plant protein 7 (355 aa).

Residues 1–58 are compositionally biased toward basic and acidic residues; that stretch reads MGEEEKKPEAAEEKKMEEKKPEEKKEGEDKKVDAEKKGEDSDKKPQEGESNKDSKEDS. The disordered stretch occupies residues 1-74; that stretch reads MGEEEKKPEA…APAPPPPPQE (74 aa). Residues 63–73 are compositionally biased toward pro residues; it reads PEAPAPPPPPQ. HMA domains follow at residues 72 to 136 and 170 to 234; these read PQEV…HRQV and VVTV…KHAA. Residues cysteine 83 and cysteine 86 each coordinate a metal cation. The disordered stretch occupies residues 132 to 157; sequence THRQVQLLSPIPPPPPPPEKKAEEDK. The a metal cation site is built by cysteine 181 and cysteine 184. Residues 235–308 are disordered; the sequence is IMKIDPPPPP…GGGEEEGKVV (74 aa). Residues 254–293 are compositionally biased toward basic and acidic residues; the sequence is EGEKKEEEKGEGESKGEEGKDDKAKTDEEKKEGDGGKGEG. Position 352 is a cysteine methyl ester (cysteine 352). Cysteine 352 carries the S-farnesyl cysteine lipid modification. Residues 353–355 constitute a propeptide, removed in mature form; the sequence is TVM.

Belongs to the HIPP family. Efficiently farnesylated in vitro.

In terms of biological role, heavy-metal-binding protein. Binds zinc, copper and nickel in a reversible manner. This chain is Heavy metal-associated isoprenylated plant protein 7, found in Arabidopsis thaliana (Mouse-ear cress).